Here is a 159-residue protein sequence, read N- to C-terminus: Ribosomal RNA large subunit methyltransferase H (159 aa).

S-adenosyl-L-methionine-binding positions include leucine 76, glycine 108, and 127–132; that span reads FSKMTF.

Belongs to the RNA methyltransferase RlmH family. As to quaternary structure, homodimer.

Its subcellular location is the cytoplasm. It catalyses the reaction pseudouridine(1915) in 23S rRNA + S-adenosyl-L-methionine = N(3)-methylpseudouridine(1915) in 23S rRNA + S-adenosyl-L-homocysteine + H(+). Specifically methylates the pseudouridine at position 1915 (m3Psi1915) in 23S rRNA. The protein is Ribosomal RNA large subunit methyltransferase H of Bifidobacterium longum (strain DJO10A).